Here is a 454-residue protein sequence, read N- to C-terminus: Bifunctional protein GlmU (454 aa).

A pyrophosphorylase region spans residues 1–228 (MTLPLHVVIL…PQDVEGANDP (228 aa)). UDP-N-acetyl-alpha-D-glucosamine contacts are provided by residues 10-13 (LAAG), K24, Q76, 81-82 (GT), 103-105 (YGD), G138, E153, N168, and N226. D105 is a binding site for Mg(2+). N226 provides a ligand contact to Mg(2+). Residues 229–249 (WQLAQLERAWQLRAARALCLQ) are linker. The segment at 250-454 (GVRMADPARV…IEGWERPKKK (205 aa)) is N-acetyltransferase. 2 residues coordinate UDP-N-acetyl-alpha-D-glucosamine: R332 and K350. H362 serves as the catalytic Proton acceptor. UDP-N-acetyl-alpha-D-glucosamine contacts are provided by Y365 and N376. Acetyl-CoA is bound by residues A379, 385–386 (NY), S404, A422, and R439.

The protein in the N-terminal section; belongs to the N-acetylglucosamine-1-phosphate uridyltransferase family. It in the C-terminal section; belongs to the transferase hexapeptide repeat family. As to quaternary structure, homotrimer. Mg(2+) is required as a cofactor.

The protein localises to the cytoplasm. The catalysed reaction is alpha-D-glucosamine 1-phosphate + acetyl-CoA = N-acetyl-alpha-D-glucosamine 1-phosphate + CoA + H(+). It carries out the reaction N-acetyl-alpha-D-glucosamine 1-phosphate + UTP + H(+) = UDP-N-acetyl-alpha-D-glucosamine + diphosphate. The protein operates within nucleotide-sugar biosynthesis; UDP-N-acetyl-alpha-D-glucosamine biosynthesis; N-acetyl-alpha-D-glucosamine 1-phosphate from alpha-D-glucosamine 6-phosphate (route II): step 2/2. It functions in the pathway nucleotide-sugar biosynthesis; UDP-N-acetyl-alpha-D-glucosamine biosynthesis; UDP-N-acetyl-alpha-D-glucosamine from N-acetyl-alpha-D-glucosamine 1-phosphate: step 1/1. Its pathway is bacterial outer membrane biogenesis; LPS lipid A biosynthesis. Its function is as follows. Catalyzes the last two sequential reactions in the de novo biosynthetic pathway for UDP-N-acetylglucosamine (UDP-GlcNAc). The C-terminal domain catalyzes the transfer of acetyl group from acetyl coenzyme A to glucosamine-1-phosphate (GlcN-1-P) to produce N-acetylglucosamine-1-phosphate (GlcNAc-1-P), which is converted into UDP-GlcNAc by the transfer of uridine 5-monophosphate (from uridine 5-triphosphate), a reaction catalyzed by the N-terminal domain. The sequence is that of Bifunctional protein GlmU from Xanthomonas campestris pv. campestris (strain 8004).